Reading from the N-terminus, the 502-residue chain is Large ribosomal subunit protein uL2m (502 aa).

The disordered stretch occupies residues 458 to 502 (AMNPVDHPHGGGEGRTKGGRPSVSPWGKPTKAGFRAGVGVGKRRI). A compositionally biased stretch (basic and acidic residues) spans 463–473 (DHPHGGGEGRT). A compositionally biased stretch (gly residues) spans 493-502 (AGVGVGKRRI).

It belongs to the universal ribosomal protein uL2 family.

It localises to the mitochondrion. This Oryza sativa (Rice) protein is Large ribosomal subunit protein uL2m (RPL2).